We begin with the raw amino-acid sequence, 281 residues long: Pantothenate synthetase (281 aa).

An ATP-binding site is contributed by 30–37; the sequence is MGALHRGH. H37 serves as the catalytic Proton donor. Q61 lines the (R)-pantoate pocket. Q61 contributes to the beta-alanine binding site. 147–150 contacts ATP; it reads GEKD. Position 153 (Q153) interacts with (R)-pantoate. Residues I176 and 184 to 187 contribute to the ATP site; that span reads LSSR.

Belongs to the pantothenate synthetase family. As to quaternary structure, homodimer.

It is found in the cytoplasm. It carries out the reaction (R)-pantoate + beta-alanine + ATP = (R)-pantothenate + AMP + diphosphate + H(+). Its pathway is cofactor biosynthesis; (R)-pantothenate biosynthesis; (R)-pantothenate from (R)-pantoate and beta-alanine: step 1/1. Catalyzes the condensation of pantoate with beta-alanine in an ATP-dependent reaction via a pantoyl-adenylate intermediate. The sequence is that of Pantothenate synthetase from Porphyromonas gingivalis (strain ATCC 33277 / DSM 20709 / CIP 103683 / JCM 12257 / NCTC 11834 / 2561).